The primary structure comprises 137 residues: Nucleoside diphosphate kinase (137 aa).

Residues K9, F57, R85, T91, R102, and N112 each contribute to the ATP site. Residue H115 is the Pros-phosphohistidine intermediate of the active site.

It belongs to the NDK family. Homotetramer. Mg(2+) is required as a cofactor.

Its subcellular location is the cytoplasm. The enzyme catalyses a 2'-deoxyribonucleoside 5'-diphosphate + ATP = a 2'-deoxyribonucleoside 5'-triphosphate + ADP. The catalysed reaction is a ribonucleoside 5'-diphosphate + ATP = a ribonucleoside 5'-triphosphate + ADP. Its function is as follows. Major role in the synthesis of nucleoside triphosphates other than ATP. The ATP gamma phosphate is transferred to the NDP beta phosphate via a ping-pong mechanism, using a phosphorylated active-site intermediate. The chain is Nucleoside diphosphate kinase from Desulfotalea psychrophila (strain LSv54 / DSM 12343).